A 294-amino-acid polypeptide reads, in one-letter code: Cytidine deaminase (294 aa).

2 CMP/dCMP-type deaminase domains span residues 48–168 (DEDA…FGPK) and 186–294 (LTGD…VLLG). 89–91 (NME) contributes to the substrate binding site. His-102 is a Zn(2+) binding site. Glu-104 serves as the catalytic Proton donor. Zn(2+) contacts are provided by Cys-129 and Cys-132.

It belongs to the cytidine and deoxycytidylate deaminase family. In terms of assembly, homodimer. Zn(2+) is required as a cofactor.

The enzyme catalyses cytidine + H2O + H(+) = uridine + NH4(+). It catalyses the reaction 2'-deoxycytidine + H2O + H(+) = 2'-deoxyuridine + NH4(+). Its function is as follows. This enzyme scavenges exogenous and endogenous cytidine and 2'-deoxycytidine for UMP synthesis. This is Cytidine deaminase from Salmonella schwarzengrund (strain CVM19633).